A 136-amino-acid chain; its full sequence is Protein NrdI (136 aa).

The protein belongs to the NrdI family.

In terms of biological role, probably involved in ribonucleotide reductase function. This is Protein NrdI from Escherichia coli (strain 55989 / EAEC).